The primary structure comprises 485 residues: ATP synthase subunit beta (485 aa).

Residue 158–165 (GGAGVGKT) participates in ATP binding.

The protein belongs to the ATPase alpha/beta chains family. In terms of assembly, F-type ATPases have 2 components, CF(1) - the catalytic core - and CF(0) - the membrane proton channel. CF(1) has five subunits: alpha(3), beta(3), gamma(1), delta(1), epsilon(1). CF(0) has four main subunits: a(1), b(1), b'(1) and c(9-12).

The protein localises to the cell inner membrane. The enzyme catalyses ATP + H2O + 4 H(+)(in) = ADP + phosphate + 5 H(+)(out). Functionally, produces ATP from ADP in the presence of a proton gradient across the membrane. The catalytic sites are hosted primarily by the beta subunits. This chain is ATP synthase subunit beta, found in Erythrobacter litoralis (strain HTCC2594).